Consider the following 113-residue polypeptide: Protein MGF 110-2L (113 aa).

An N-terminal signal peptide occupies residues 1-31 (MGFFSYLGLVLVGLASLTSLASLANLQDFST).

Belongs to the asfivirus MGF 110 family.

Its function is as follows. Plays a role in virus cell tropism, and may be required for efficient virus replication in macrophages. In African swine fever virus (isolate Pig/Kenya/KEN-50/1950) (ASFV), this protein is Protein MGF 110-2L.